The chain runs to 326 residues: Transcription factor WRKY45-1 (326 aa).

2 disordered regions span residues 67-114 (GGEG…SVVV) and 252-288 (GVGSSDQEEVLSSLTPGSSAARGGGGGGGVAGPFGPD). Residues 112–180 (VVVKNLDDGQ…YIGEHTCRDP (69 aa)) constitute a DNA-binding region (WRKY). Residues 273–283 (RGGGGGGGVAG) are compositionally biased toward gly residues.

The protein belongs to the WRKY group III family. Expressed in aleurone cells.

It localises to the nucleus. In terms of biological role, transcriptional activator involved in defense responses against pathogens. Acts as a positive regulator of defense responses against the rice blast fungus Magnaporthe oryzae. Acts through W-boxes, which are cis-elements that are enriched in the promoters of several defense-related genes. Plays an important role in the benzothiadiazole-induced disease resistance by mediating salicylic acid (SA) defense signaling pathway, independently of the disease resistance gene NPR1/NH1. Acts as a negative regulator of defense responses against the bacterial blight Xanthomonas oryzae pv oryzae (Xoo) and the bacterial streak Xanthomonas oryzae pv oryzicola (Xoc). Acts downstream of abscisic acid (ABA) signaling in response to the rice blast fungus. ABA is a negative regulator of defense responses that interacts antagonistically with salicylic acid (SA) signaling pathway. Acts as a negative regulator of ABA signaling that suppresses growth of seedlings. Does not seem to be involved in the regulation of salt stress response. Acts as a negative regulator of cold stress response. Acts as a negative regulator of drought stress response. The polypeptide is Transcription factor WRKY45-1 (Oryza sativa subsp. japonica (Rice)).